The chain runs to 82 residues: Small ribosomal subunit protein bS16 (82 aa).

The protein belongs to the bacterial ribosomal protein bS16 family.

The protein is Small ribosomal subunit protein bS16 of Pasteurella multocida (strain Pm70).